The chain runs to 208 residues: Urease accessory protein UreG (208 aa).

12–19 (GPVGAGKT) provides a ligand contact to GTP.

The protein belongs to the SIMIBI class G3E GTPase family. UreG subfamily. As to quaternary structure, homodimer. UreD, UreF and UreG form a complex that acts as a GTP-hydrolysis-dependent molecular chaperone, activating the urease apoprotein by helping to assemble the nickel containing metallocenter of UreC. The UreE protein probably delivers the nickel.

It is found in the cytoplasm. Facilitates the functional incorporation of the urease nickel metallocenter. This process requires GTP hydrolysis, probably effectuated by UreG. The sequence is that of Urease accessory protein UreG from Rhodobacter capsulatus (Rhodopseudomonas capsulata).